The primary structure comprises 404 residues: Tryptophan synthase beta chain (404 aa).

Lys-94 carries the post-translational modification N6-(pyridoxal phosphate)lysine.

It belongs to the TrpB family. In terms of assembly, tetramer of two alpha and two beta chains. Pyridoxal 5'-phosphate is required as a cofactor.

The enzyme catalyses (1S,2R)-1-C-(indol-3-yl)glycerol 3-phosphate + L-serine = D-glyceraldehyde 3-phosphate + L-tryptophan + H2O. It functions in the pathway amino-acid biosynthesis; L-tryptophan biosynthesis; L-tryptophan from chorismate: step 5/5. Functionally, the beta subunit is responsible for the synthesis of L-tryptophan from indole and L-serine. The polypeptide is Tryptophan synthase beta chain (Staphylococcus saprophyticus subsp. saprophyticus (strain ATCC 15305 / DSM 20229 / NCIMB 8711 / NCTC 7292 / S-41)).